The primary structure comprises 279 residues: Thymidylate synthase (279 aa).

141-142 (RR) contributes to the dUMP binding site. Catalysis depends on cysteine 161, which acts as the Nucleophile. DUMP-binding positions include 181–184 (RSND), asparagine 192, and 222–224 (HIY). Position 184 (aspartate 184) interacts with (6R)-5,10-methylene-5,6,7,8-tetrahydrofolate. Alanine 278 provides a ligand contact to (6R)-5,10-methylene-5,6,7,8-tetrahydrofolate.

The protein belongs to the thymidylate synthase family. Bacterial-type ThyA subfamily. In terms of assembly, homodimer.

The protein resides in the cytoplasm. It carries out the reaction dUMP + (6R)-5,10-methylene-5,6,7,8-tetrahydrofolate = 7,8-dihydrofolate + dTMP. The protein operates within pyrimidine metabolism; dTTP biosynthesis. Its function is as follows. Catalyzes the reductive methylation of 2'-deoxyuridine-5'-monophosphate (dUMP) to 2'-deoxythymidine-5'-monophosphate (dTMP) while utilizing 5,10-methylenetetrahydrofolate (mTHF) as the methyl donor and reductant in the reaction, yielding dihydrofolate (DHF) as a by-product. This enzymatic reaction provides an intracellular de novo source of dTMP, an essential precursor for DNA biosynthesis. This Bacillus licheniformis (strain ATCC 14580 / DSM 13 / JCM 2505 / CCUG 7422 / NBRC 12200 / NCIMB 9375 / NCTC 10341 / NRRL NRS-1264 / Gibson 46) protein is Thymidylate synthase.